A 550-amino-acid polypeptide reads, in one-letter code: Hydroxylamine reductase (550 aa).

Positions 3, 6, 18, and 25 each coordinate [2Fe-2S] cluster. The hybrid [4Fe-2O-2S] cluster site is built by H249, E273, C317, C405, C433, C458, E492, and K494. C405 is subject to Cysteine persulfide.

This sequence belongs to the HCP family. [2Fe-2S] cluster is required as a cofactor. Requires hybrid [4Fe-2O-2S] cluster as cofactor.

The protein resides in the cytoplasm. It carries out the reaction A + NH4(+) + H2O = hydroxylamine + AH2 + H(+). Its function is as follows. Catalyzes the reduction of hydroxylamine to form NH(3) and H(2)O. The protein is Hydroxylamine reductase of Pectobacterium carotovorum subsp. carotovorum (strain PC1).